Here is a 299-residue protein sequence, read N- to C-terminus: MVAVTELGYLGLTVTNLDAWRSYAAEVAGMEIVDEGEGDRLYLRMDQWHHRIVLHASDSDDLAYLGWRVADPVEFDAMVAKLTAAGISLTVASEAEARERRVLGLAKLADPGGNPTEIFYGPQVDTHKPFHPGRPMYGKFVTGSEGIGHCILRQDDVPAAAAFYGLLGLRGSVEYHLQLPNGMVAQPYFMHCNERQHSVAFGLGPMEKRINHLMFEYTDLDDLGLAHDIVRARKIDVALQLGKHANDQALTFYCANPSGWLWEFGWGARKAPSQQEYYTRDIFGHGNEAAGYGMDIPLG.

2 consecutive VOC domains span residues 6–121 and 146–267; these read ELGY…IFYG and GIGH…FGWG. Fe cation contacts are provided by His-149, His-212, and Glu-263.

This sequence belongs to the extradiol ring-cleavage dioxygenase family. In terms of assembly, homooctamer. The cofactor is Fe(2+).

The enzyme catalyses biphenyl-2,3-diol + O2 = 2-hydroxy-6-oxo-6-phenylhexa-2,4-dienoate + H(+). It functions in the pathway xenobiotic degradation; biphenyl degradation; 2-hydroxy-2,4-pentadienoate and benzoate from biphenyl: step 3/4. The polypeptide is Biphenyl-2,3-diol 1,2-dioxygenase (bphC) (Sphingomonas paucimobilis (Pseudomonas paucimobilis)).